We begin with the raw amino-acid sequence, 432 residues long: D-amino acid dehydrogenase (432 aa).

Position 3-17 (3-17) interacts with FAD; it reads VVILGSGVVGVASAW.

Belongs to the DadA oxidoreductase family. The cofactor is FAD.

The enzyme catalyses a D-alpha-amino acid + A + H2O = a 2-oxocarboxylate + AH2 + NH4(+). The protein operates within amino-acid degradation; D-alanine degradation; NH(3) and pyruvate from D-alanine: step 1/1. Its function is as follows. Oxidative deamination of D-amino acids. The polypeptide is D-amino acid dehydrogenase (Shigella boydii serotype 18 (strain CDC 3083-94 / BS512)).